The chain runs to 500 residues: Mucin-like protein 3 (500 aa).

Residues M1–A27 form the signal peptide. Topologically, residues G28–A429 are extracellular. Disordered regions lie at residues T55–P198 and E275–S324. Positions A58 to D71 are enriched in basic and acidic residues. Over residues T76–R89 the composition is skewed to polar residues. An N-linked (GlcNAc...) asparagine glycan is attached at N108. Composition is skewed to basic and acidic residues over residues V111–L123 and A132–R142. An N-linked (GlcNAc...) asparagine glycan is attached at N148. 3 stretches are compositionally biased toward polar residues: residues P159 to S178, S279 to Q289, and T298 to S324. The chain crosses the membrane as a helical span at residues I430 to L450. The Cytoplasmic portion of the chain corresponds to V451–P500.

The protein resides in the cell membrane. Its subcellular location is the cytoplasm. Its function is as follows. May modulate NF-kappaB signaling and play a role in cell growth. The protein is Mucin-like protein 3 of Mus musculus (Mouse).